A 278-amino-acid chain; its full sequence is S-formylglutathione hydrolase YeiG (278 aa).

Residues Ser-145, Asp-223, and His-256 each act as charge relay system in the active site.

It belongs to the esterase D family.

The enzyme catalyses S-formylglutathione + H2O = formate + glutathione + H(+). In terms of biological role, serine hydrolase involved in the detoxification of formaldehyde. Hydrolyzes S-formylglutathione to glutathione and formate. The polypeptide is S-formylglutathione hydrolase YeiG (yeiG) (Escherichia coli O6:K15:H31 (strain 536 / UPEC)).